A 407-amino-acid chain; its full sequence is Multifunctional CCA protein (407 aa).

The ATP site is built by Gly-8 and Arg-11. Gly-8 and Arg-11 together coordinate CTP. Positions 21 and 23 each coordinate Mg(2+). Residues Arg-91, Arg-137, and Arg-140 each contribute to the ATP site. Arg-91, Arg-137, and Arg-140 together coordinate CTP. The HD domain occupies 228 to 329; sequence SGIHTLMVAQ…IKIFDKMDVW (102 aa).

The protein belongs to the tRNA nucleotidyltransferase/poly(A) polymerase family. Bacterial CCA-adding enzyme type 1 subfamily. In terms of assembly, monomer. Can also form homodimers and oligomers. Mg(2+) is required as a cofactor. Ni(2+) serves as cofactor.

The catalysed reaction is a tRNA precursor + 2 CTP + ATP = a tRNA with a 3' CCA end + 3 diphosphate. The enzyme catalyses a tRNA with a 3' CCA end + 2 CTP + ATP = a tRNA with a 3' CCACCA end + 3 diphosphate. Its function is as follows. Catalyzes the addition and repair of the essential 3'-terminal CCA sequence in tRNAs without using a nucleic acid template. Adds these three nucleotides in the order of C, C, and A to the tRNA nucleotide-73, using CTP and ATP as substrates and producing inorganic pyrophosphate. tRNA 3'-terminal CCA addition is required both for tRNA processing and repair. Also involved in tRNA surveillance by mediating tandem CCA addition to generate a CCACCA at the 3' terminus of unstable tRNAs. While stable tRNAs receive only 3'-terminal CCA, unstable tRNAs are marked with CCACCA and rapidly degraded. The polypeptide is Multifunctional CCA protein (Aliivibrio fischeri (strain MJ11) (Vibrio fischeri)).